A 436-amino-acid polypeptide reads, in one-letter code: 3-ketoacyl-CoA thiolase (436 aa).

C99 acts as the Acyl-thioester intermediate in catalysis. Catalysis depends on proton acceptor residues H392 and C422.

Belongs to the thiolase-like superfamily. Thiolase family. In terms of assembly, heterotetramer of two alpha chains (FadJ) and two beta chains (FadI).

The protein localises to the cytoplasm. The catalysed reaction is an acyl-CoA + acetyl-CoA = a 3-oxoacyl-CoA + CoA. Its pathway is lipid metabolism; fatty acid beta-oxidation. Catalyzes the final step of fatty acid oxidation in which acetyl-CoA is released and the CoA ester of a fatty acid two carbons shorter is formed. The chain is 3-ketoacyl-CoA thiolase from Enterobacter sp. (strain 638).